The following is a 1481-amino-acid chain: Neuropathy target esterase sws (1481 aa).

At 1–34 the chain is on the lumenal side; it reads MDVLELLRASANGCYNTIFSDAWSQYVSQQITSS. Residues 35–55 traverse the membrane as a helical segment; it reads LYLYIALGILTVLFVAWFIYF. Topologically, residues 56 to 1481 are cytoplasmic; it reads KRLARLRLRD…KENKNVNTKN (1426 aa). 175 to 302 is an a nucleoside 3',5'-cyclic phosphate binding site; that stretch reads IFGHFEKPVF…IRVIQVIMIR (128 aa). Positions 336–420 are disordered; sequence HLNSQSQSSQ…NNVQLPEVHG (85 aa). Low complexity-rich tracts occupy residues 339–379 and 401–412; these read SQSQ…LPLQ and SGPNPNPNSGNN. The residue at position 448 (Ser-448) is a Phosphoserine. A nucleoside 3',5'-cyclic phosphate contacts are provided by residues 492–624 and 613–740; these read ELGL…VVRR and IVLD…LSHR. The PNPLA domain maps to 967 to 1133; sequence LVLGGGGARG…VNNLPGHLWR (167 aa). Residues 971 to 976 carry the GXGXXG motif; it reads GGGARG. The GXSXG motif lies at 998 to 1002; that stretch reads GVSIG. The Nucleophile role is filled by Ser-1000. Asp-1120 serves as the catalytic Proton acceptor. The DGA/G signature appears at 1120–1122; it reads DGG. Ser-1214 carries the phosphoserine modification. Positions 1366–1481 are disordered; sequence LSLSEAEMDS…KENKNVNTKN (116 aa). Composition is skewed to basic and acidic residues over residues 1379–1390 and 1400–1410; these read IDFRSDSKKDKA and KDNEDKTDAVD. Positions 1445–1457 are enriched in low complexity; sequence TNTMTTQTTSPTT.

The protein belongs to the NTE family. As to quaternary structure, interacts with Pka-C3; interaction inhibits the catalytic function of Pka-C3 and the esterase activity of sws.

It localises to the endoplasmic reticulum membrane. The enzyme catalyses a 1-acyl-sn-glycero-3-phosphocholine + H2O = sn-glycerol 3-phosphocholine + a fatty acid + H(+). In terms of biological role, phospholipase B that deacylates intracellular phosphatidylcholine (PtdCho), generating glycerophosphocholine (GroPtdCho). This deacylation occurs at both sn-2 and sn-1 positions of PtdCho. Its specific chemical modification by certain organophosphorus (OP) compounds leads to distal axonopathy. Plays a role in the signaling mechanism between neurons and glia that regulates glia wrapping during development of the adult brain. Essential for membrane lipid homeostasis and cell survival in both neurons and glia of the adult brain. The polypeptide is Neuropathy target esterase sws (Drosophila willistoni (Fruit fly)).